The following is a 183-amino-acid chain: Putative 3-methyladenine DNA glycosylase (183 aa).

The protein belongs to the DNA glycosylase MPG family.

The polypeptide is Putative 3-methyladenine DNA glycosylase (Rickettsia conorii (strain ATCC VR-613 / Malish 7)).